Consider the following 332-residue polypeptide: Tetraacyldisaccharide 4'-kinase (332 aa).

Position 58–65 (58–65) interacts with ATP; the sequence is TVGGSGKT.

The protein belongs to the LpxK family.

The enzyme catalyses a lipid A disaccharide + ATP = a lipid IVA + ADP + H(+). The protein operates within glycolipid biosynthesis; lipid IV(A) biosynthesis; lipid IV(A) from (3R)-3-hydroxytetradecanoyl-[acyl-carrier-protein] and UDP-N-acetyl-alpha-D-glucosamine: step 6/6. Its function is as follows. Transfers the gamma-phosphate of ATP to the 4'-position of a tetraacyldisaccharide 1-phosphate intermediate (termed DS-1-P) to form tetraacyldisaccharide 1,4'-bis-phosphate (lipid IVA). This Shewanella piezotolerans (strain WP3 / JCM 13877) protein is Tetraacyldisaccharide 4'-kinase.